Reading from the N-terminus, the 86-residue chain is Small ribosomal subunit protein uS15 (86 aa).

Belongs to the universal ribosomal protein uS15 family. Part of the 30S ribosomal subunit. Forms a bridge to the 50S subunit in the 70S ribosome, contacting the 23S rRNA.

Functionally, one of the primary rRNA binding proteins, it binds directly to 16S rRNA where it helps nucleate assembly of the platform of the 30S subunit by binding and bridging several RNA helices of the 16S rRNA. Forms an intersubunit bridge (bridge B4) with the 23S rRNA of the 50S subunit in the ribosome. The protein is Small ribosomal subunit protein uS15 of Mycoplasma pneumoniae (strain ATCC 29342 / M129 / Subtype 1) (Mycoplasmoides pneumoniae).